Here is a 341-residue protein sequence, read N- to C-terminus: MEQNGSFRVDSEFRYTLFPIVYSVIFVLGVVANGYVLWVFATLYPSKKLNEIKIFMVNLTVADLLFLMTLPLWIVYYSNEGDWIVHKFLCNLAGCLFFINTYCSVAFLGVITYNRYQAVAYPIKTAQATTRKRGITLSLVIWISIAATASYFLATDSTNVVPKKDGSGNITRCFEHYEPYSVPILVVHIFITSCFFLVFFLIFYCNMVIIHTLLTRPVRQQRKPEVKRRALWMVCTVLAVFVICFVPHHVVQLPWTLAELGYQTNFHQAINDAHQITLCLLSTNCVLDPVIYCFLTKKFRKHLSEKFYSMRSSRKCSRATSDTCTEVMMPANQTPVLPLKN.

The Extracellular portion of the chain corresponds to 1-16; that stretch reads MEQNGSFRVDSEFRYT. The N-linked (GlcNAc...) asparagine glycan is linked to N4. A helical transmembrane segment spans residues 17–38; it reads LFPIVYSVIFVLGVVANGYVLW. At 39–54 the chain is on the cytoplasmic side; that stretch reads VFATLYPSKKLNEIKI. A helical transmembrane segment spans residues 55–74; the sequence is FMVNLTVADLLFLMTLPLWI. At 75 to 91 the chain is on the extracellular side; sequence VYYSNEGDWIVHKFLCN. The cysteines at positions 90 and 173 are disulfide-linked. Residues 92 to 113 form a helical membrane-spanning segment; sequence LAGCLFFINTYCSVAFLGVITY. Residues 114–133 lie on the Cytoplasmic side of the membrane; it reads NRYQAVAYPIKTAQATTRKR. Residues 134 to 155 traverse the membrane as a helical segment; it reads GITLSLVIWISIAATASYFLAT. Over 156–184 the chain is Extracellular; that stretch reads DSTNVVPKKDGSGNITRCFEHYEPYSVPI. A glycan (N-linked (GlcNAc...) asparagine) is linked at N169. Residues 185-205 form a helical membrane-spanning segment; it reads LVVHIFITSCFFLVFFLIFYC. At 206-233 the chain is on the cytoplasmic side; it reads NMVIIHTLLTRPVRQQRKPEVKRRALWM. Residues 234–254 traverse the membrane as a helical segment; sequence VCTVLAVFVICFVPHHVVQLP. The Extracellular segment spans residues 255–275; the sequence is WTLAELGYQTNFHQAINDAHQ. The helical transmembrane segment at 276 to 295 threads the bilayer; that stretch reads ITLCLLSTNCVLDPVIYCFL. Residues 296 to 341 lie on the Cytoplasmic side of the membrane; the sequence is TKKFRKHLSEKFYSMRSSRKCSRATSDTCTEVMMPANQTPVLPLKN.

It belongs to the G-protein coupled receptor 1 family. Interacts with ARRB1. Present in almost all organs including spleen, small intestine, kidney, lung, liver and brain.

It localises to the cell membrane. In terms of biological role, receptor for platelet activating factor, a chemotactic phospholipid mediator that possesses potent inflammatory, smooth-muscle contractile and hypotensive activity. Seems to mediate its action via a G protein that activates a phosphatidylinositol-calcium second messenger system. The chain is Platelet-activating factor receptor (Ptafr) from Rattus norvegicus (Rat).